Here is a 556-residue protein sequence, read N- to C-terminus: Glucose-6-phosphate isomerase (556 aa).

Residue Glu360 is the Proton donor of the active site. Catalysis depends on residues His391 and Lys519.

The protein belongs to the GPI family.

Its subcellular location is the cytoplasm. The enzyme catalyses alpha-D-glucose 6-phosphate = beta-D-fructose 6-phosphate. It participates in carbohydrate biosynthesis; gluconeogenesis. It functions in the pathway carbohydrate degradation; glycolysis; D-glyceraldehyde 3-phosphate and glycerone phosphate from D-glucose: step 2/4. Functionally, catalyzes the reversible isomerization of glucose-6-phosphate to fructose-6-phosphate. This is Glucose-6-phosphate isomerase from Acinetobacter baumannii (strain AB0057).